The primary structure comprises 494 residues: Protein DETOXIFICATION 21 (494 aa).

N-acetylalanine is present on A2. Helical transmembrane passes span 40-60 (LWIV…VSII), 73-95 (LAAY…LGMA), 123-143 (IVLT…GPIL), 158-178 (IIAL…TCQM), 188-208 (IIAY…WLLM), 217-237 (GAMT…LLFV), 268-288 (GGML…TGNL), 297-317 (ALAI…GFLA), 340-360 (LTAV…FLFL), 384-404 (LLAF…VAVG), 416-436 (LACY…VVGL), and 441-461 (VWIG…VMTL).

The protein belongs to the multi antimicrobial extrusion (MATE) (TC 2.A.66.1) family.

The protein resides in the membrane. In Arabidopsis thaliana (Mouse-ear cress), this protein is Protein DETOXIFICATION 21.